The sequence spans 165 residues: Methylated-DNA--protein-cysteine methyltransferase (165 aa).

The active-site Nucleophile; methyl group acceptor is the Cys-126.

Belongs to the MGMT family.

Its subcellular location is the cytoplasm. It catalyses the reaction a 6-O-methyl-2'-deoxyguanosine in DNA + L-cysteinyl-[protein] = S-methyl-L-cysteinyl-[protein] + a 2'-deoxyguanosine in DNA. The enzyme catalyses a 4-O-methyl-thymidine in DNA + L-cysteinyl-[protein] = a thymidine in DNA + S-methyl-L-cysteinyl-[protein]. In terms of biological role, involved in the cellular defense against the biological effects of O6-methylguanine (O6-MeG) and O4-methylthymine (O4-MeT) in DNA. Repairs the methylated nucleobase in DNA by stoichiometrically transferring the methyl group to a cysteine residue in the enzyme. This is a suicide reaction: the enzyme is irreversibly inactivated. The chain is Methylated-DNA--protein-cysteine methyltransferase from Mycolicibacterium paratuberculosis (strain ATCC BAA-968 / K-10) (Mycobacterium paratuberculosis).